A 577-amino-acid chain; its full sequence is Protein downstream neighbor of son homolog (577 aa).

2 disordered regions span residues 1 to 67 and 328 to 382; these read MAEL…KRRN and FTQP…LEEM. The span at 362–375 shows a compositional bias: acidic residues; it reads ETDEVSDESDEDES.

Belongs to the DONSON family. Component of the replisome complex.

Its subcellular location is the nucleus. Its function is as follows. Replisome component that maintains genome stability by protecting stalled or damaged replication forks. After the induction of replication stress, required for the stabilization of stalled replication forks, the efficient activation of the intra-S-phase and G/2M cell-cycle checkpoints and the maintenance of genome stability. The polypeptide is Protein downstream neighbor of son homolog (Xenopus tropicalis (Western clawed frog)).